We begin with the raw amino-acid sequence, 252 residues long: MKTVTVRDLVVGEGAPKIIVSLMGKTITDVKSEALAYREADFDILEWRVDHFANVTTAESVLEAAGAIQEIITDKPLLFTFRSAKEGGEQALTTGQYIALNRAAVDSGLVDMIDLELFTGDDEVKATVGYAHQHNVAVIMSNHDFHKTPAAEEIVQRLRKMQELGADIPKIAVMPQTKADVLTLLTATVEMQERYADRPIITMSMSKTGVISRLAGEVFGSAATFGAVKKASAPGQISVADLRTVLTILHQA.

Residues S21, 46-48, and R82 each bind 3-dehydroquinate; that span reads EWR. The active-site Proton donor/acceptor is H143. The Schiff-base intermediate with substrate role is filled by K170. 3-dehydroquinate is bound by residues R213, S232, and Q236.

Belongs to the type-I 3-dehydroquinase family. In terms of assembly, homodimer.

The enzyme catalyses 3-dehydroquinate = 3-dehydroshikimate + H2O. It participates in metabolic intermediate biosynthesis; chorismate biosynthesis; chorismate from D-erythrose 4-phosphate and phosphoenolpyruvate: step 3/7. Involved in the third step of the chorismate pathway, which leads to the biosynthesis of aromatic amino acids. Catalyzes the cis-dehydration of 3-dehydroquinate (DHQ) and introduces the first double bond of the aromatic ring to yield 3-dehydroshikimate. This is 3-dehydroquinate dehydratase from Salmonella choleraesuis (strain SC-B67).